Reading from the N-terminus, the 565-residue chain is MTQSSAQGTRLDTQRTIRAPRGTQLRAKSWLTEAPLRMLMNNLDPDVAEHPHALVVYGGIGRAARNWECFDKIVEVLERLEDDQTLLVQSGKPVGVFPTHKNAPRVLIANSNLVPHWANWEHFNELDKQGLMMYGQMTAGSWIYIGSQGIVQGTYETFVAVAKKHFNGDAKGRWVLTGGLGGMGGAQPLAATMAGFSMIAVECDESRIDYRLRTGYVDKKANTLDEALAMIADTDRPISVGLLGNAADIFPELVKRNITPDVVTDQTSAHDPLNGYLPLGWSMEKAAQMRQQNEAEVVKAAKASMAIQVRAMLDLQTRGAATLDYGNNIRQMALEEGVANAFDFPGFVPAYIRPLFCEGIGPFRWAALSGDPEDIYKTDQKVKELIPDNPHLHNWLDMARERIHFQGLPARICWVGLKDRARLGLAFNEMVKNGELKAPIVIGRDHLDSGSVASPNRETEGMLDGSDAVSDWPLLNALLNTAGGATWVSLHHGGGVGMGFSQHSGMVICCDGSDDAAERIARVLHNDPATGVMRHADAGYEIAKRCAQQQKLDLPMLNAELAKLK.

Residues 58–59 (GG), Gln136, 182–184 (GMG), Glu202, Arg207, 245–246 (NA), 266–270 (QTSAH), 276–277 (YL), and Tyr325 contribute to the NAD(+) site. Cys413 is an active-site residue. Gly495 is an NAD(+) binding site.

This sequence belongs to the urocanase family. NAD(+) serves as cofactor.

It is found in the cytoplasm. The enzyme catalyses 4-imidazolone-5-propanoate = trans-urocanate + H2O. The protein operates within amino-acid degradation; L-histidine degradation into L-glutamate; N-formimidoyl-L-glutamate from L-histidine: step 2/3. Catalyzes the conversion of urocanate to 4-imidazolone-5-propionate. In Vibrio cholerae serotype O1 (strain ATCC 39541 / Classical Ogawa 395 / O395), this protein is Urocanate hydratase.